We begin with the raw amino-acid sequence, 185 residues long: Small ribosomal subunit protein bS16 (185 aa).

Positions 83–185 (QWTHGNNPEK…APASEETTEG (103 aa)) are disordered. The span at 89–125 (NPEKAKPGKKAQERDAERTQRDADRVAAEAQAKEDAK) shows a compositional bias: basic and acidic residues. 2 stretches are compositionally biased toward low complexity: residues 126–146 (AAAA…AAAP) and 159–176 (VEAA…AEEA).

The protein belongs to the bacterial ribosomal protein bS16 family.

In Caulobacter sp. (strain K31), this protein is Small ribosomal subunit protein bS16.